The following is a 515-amino-acid chain: 1-pyrroline-5-carboxylate dehydrogenase (515 aa).

Residues E286 and C320 contribute to the active site.

The protein belongs to the aldehyde dehydrogenase family. RocA subfamily.

It catalyses the reaction L-glutamate 5-semialdehyde + NAD(+) + H2O = L-glutamate + NADH + 2 H(+). Its pathway is amino-acid degradation; L-proline degradation into L-glutamate; L-glutamate from L-proline: step 2/2. This Geobacillus kaustophilus (strain HTA426) protein is 1-pyrroline-5-carboxylate dehydrogenase.